A 183-amino-acid polypeptide reads, in one-letter code: Ribosome rescue factor SmrB (183 aa).

The 76-residue stretch at 98–173 folds into the Smr domain; the sequence is LDLHGLTQLQ…GDAALLVLIE (76 aa).

It belongs to the SmrB family. In terms of assembly, associates with collided ribosomes, but not with correctly translating polysomes.

In terms of biological role, acts as a ribosome collision sensor. Detects stalled/collided disomes (pairs of ribosomes where the leading ribosome is stalled and a second ribosome has collided with it) and endonucleolytically cleaves mRNA at the 5' boundary of the stalled ribosome. Stalled/collided disomes form a new interface (primarily via the 30S subunits) that binds SmrB. Cleaved mRNA becomes available for tmRNA ligation, leading to ribosomal subunit dissociation and rescue of stalled ribosomes. The chain is Ribosome rescue factor SmrB from Salmonella agona (strain SL483).